The primary structure comprises 310 residues: Zinc finger protein unc-98 (310 aa).

Positions Gly73–Ser84 are enriched in polar residues. Positions Gly73–Ser102 are disordered. 2 consecutive C2H2-type zinc fingers follow at residues Tyr113–His135 and Tyr141–His163. The C2H2-type 3; degenerate zinc-finger motif lies at Tyr169 to His188. Residues Ala198–Phe310 form an interaction with myo-3 region. The segment at Tyr246–His268 adopts a C2H2-type 4 zinc-finger fold.

Interacts with hum-6, mep-1, myo-3, unc-96 and unc-97/PINCH. As to expression, expressed in embryos from 1.5- to 2-fold stage in myofibrils. In larvae and adults, it is expressed in body wall muscle, and in addition, anal depressor muscle and vulval muscles. More specifically it is found in the thick filaments of muscle fibers.

It is found in the nucleus. The protein resides in the cytoplasm. Probable transcription factor required for muscle structure. Its dual subcellular localization suggests that it may function both as a muscle adhesion complex protein and as a transcription factor, or work together with transcription factors, to influence gene expression. Thought to act as a molecular bridge between unc-97 and myo-3 at the M-line of muscles, possibly in a signaling role. Plays a role in the formation of muscle connections, also called muscle arm extensions, between the body wall and the motor axons in the dorsal and ventral cord. This is Zinc finger protein unc-98 (unc-98) from Caenorhabditis elegans.